We begin with the raw amino-acid sequence, 195 residues long: Nicotinamide riboside kinase 1 (195 aa).

10-18 (GVTNGGKTT) lines the ATP pocket. Positions 17 and 36 each coordinate Mg(2+). Asp-36 functions as the Proton acceptor in the catalytic mechanism. Residues 36–39 (DDFF) and 55–56 (YD) each bind substrate. Arg-128 contacts ATP. Residues Arg-129 and 134–135 (YE) contribute to the substrate site. ATP-binding positions include 132 to 134 (RVY) and 172 to 174 (RSE).

Belongs to the uridine kinase family. NRK subfamily. In terms of assembly, monomer.

The enzyme catalyses beta-nicotinamide D-riboside + ATP = beta-nicotinamide D-ribonucleotide + ADP + H(+). It catalyses the reaction beta-D-ribosylnicotinate + ATP = nicotinate beta-D-ribonucleotide + ADP + H(+). Its pathway is cofactor biosynthesis; NAD(+) biosynthesis. Catalyzes the phosphorylation of nicotinamide riboside (NR) and nicotinic acid riboside (NaR) to form nicotinamide mononucleotide (NMN) and nicotinic acid mononucleotide (NaMN). This is Nicotinamide riboside kinase 1 (Nmrk1) from Rattus norvegicus (Rat).